The primary structure comprises 86 residues: Small ribosomal subunit protein uS17 (86 aa).

The protein belongs to the universal ribosomal protein uS17 family. Part of the 30S ribosomal subunit.

In terms of biological role, one of the primary rRNA binding proteins, it binds specifically to the 5'-end of 16S ribosomal RNA. This is Small ribosomal subunit protein uS17 from Streptococcus pyogenes serotype M3 (strain ATCC BAA-595 / MGAS315).